The following is a 168-amino-acid chain: Ribosome rescue factor SmrB (168 aa).

A Smr domain is found at 92–167 (LDLHGLTKEQ…GDAAILILFE (76 aa)).

This sequence belongs to the SmrB family. In terms of assembly, associates with collided ribosomes, but not with correctly translating polysomes.

Its function is as follows. Acts as a ribosome collision sensor. Detects stalled/collided disomes (pairs of ribosomes where the leading ribosome is stalled and a second ribosome has collided with it) and endonucleolytically cleaves mRNA at the 5' boundary of the stalled ribosome. Stalled/collided disomes form a new interface (primarily via the 30S subunits) that binds SmrB. Cleaved mRNA becomes available for tmRNA ligation, leading to ribosomal subunit dissociation and rescue of stalled ribosomes. This chain is Ribosome rescue factor SmrB, found in Pasteurella multocida (strain Pm70).